A 188-amino-acid polypeptide reads, in one-letter code: Elongation factor P (188 aa).

At Lys34 the chain carries N6-(3,6-diaminohexanoyl)-5-hydroxylysine.

The protein belongs to the elongation factor P family. In terms of processing, may be beta-lysylated on the epsilon-amino group of Lys-34 by the combined action of EpmA and EpmB, and then hydroxylated on the C5 position of the same residue by EpmC (if this protein is present). Lysylation is critical for the stimulatory effect of EF-P on peptide-bond formation. The lysylation moiety may extend toward the peptidyltransferase center and stabilize the terminal 3-CCA end of the tRNA. Hydroxylation of the C5 position on Lys-34 may allow additional potential stabilizing hydrogen-bond interactions with the P-tRNA.

The protein localises to the cytoplasm. The protein operates within protein biosynthesis; polypeptide chain elongation. Involved in peptide bond synthesis. Alleviates ribosome stalling that occurs when 3 or more consecutive Pro residues or the sequence PPG is present in a protein, possibly by augmenting the peptidyl transferase activity of the ribosome. Modification of Lys-34 is required for alleviation. This chain is Elongation factor P, found in Vibrio vulnificus (strain CMCP6).